A 441-amino-acid polypeptide reads, in one-letter code: MASNYVFSVLRSLLLLIHTVFLGQHHVSSATIIKSLPGFEGPLPFELETGYIGVGEEEEVQLFYYFIKSERNPKEDPLLLWLSGGPGCSSISGLLFENGPLAMKLDVYNGTLPSLVSTTYSWTKASSMIFLDQPVGAGFSYSRTQLLNKPSDSGEAKRIHEFLQKWLGKHQEFSSNPFYVGGDSYSGMVVPATVQEISKGNYECCNPPINLQGYVLGNPLTDFVYDYNSRIPFAHGMALISDELFESLKKTCKGDYRNVHPRNTECLKFIEEFNKCTNSICQRRIIDPFCETETPNCYIYRFLLAAYWANDETVRKALQIKKETIGEWVRCHYGIPYNYDIKSSIPYHMNNSINGYRSLIYSGDHDFEVPFLGTQAWIRSLNYSVIDDWRPWMIKDQIAGYTRTYANKMTFATIRGGGHTIEFKPEEASIMFQRWIKGQPL.

A signal peptide spans 1-30; it reads MASNYVFSVLRSLLLLIHTVFLGQHHVSSA. 3 disulfide bridges follow: Cys88–Cys331, Cys252–Cys266, and Cys290–Cys297. Asn109 carries an N-linked (GlcNAc...) asparagine glycan. Residue Ser184 is part of the active site. Asn350 carries N-linked (GlcNAc...) asparagine glycosylation. Asp366 is a catalytic residue. A glycan (N-linked (GlcNAc...) asparagine) is linked at Asn382. His419 is a catalytic residue.

Belongs to the peptidase S10 family. In terms of tissue distribution, expressed in roots.

It is found in the secreted. In terms of biological role, probable carboxypeptidase. The polypeptide is Serine carboxypeptidase-like 3 (SCPL3) (Arabidopsis thaliana (Mouse-ear cress)).